The primary structure comprises 115 residues: uncharacterized protein (115 aa).

This is an uncharacterized protein from Bacillus subtilis (strain 168).